Reading from the N-terminus, the 213-residue chain is Oxidase ustYa (213 aa).

Positions 1-26 are disordered; sequence MAERSSNGYKEVPVRQSEESTIAEEE. A helical transmembrane segment spans residues 48 to 68; sequence AVWFLIALLLLSNIGLLGGLI. N98 carries N-linked (GlcNAc...) asparagine glycosylation. Short sequence motifs (HXXHC) lie at residues 123–127 and 150–154; these read HQLHC and HLMHC.

This sequence belongs to the ustYa family.

It localises to the membrane. Its pathway is mycotoxin biosynthesis. Its function is as follows. Oxidase; part of the gene cluster that mediates the biosynthesis of the secondary metabolite ustiloxin B, an antimitotic tetrapeptide. First, ustA is processed by the subtilisin-like endoprotease Kex2 that is outside the ustiloxin B gene cluster, at the C-terminal side of Arg-Lys, after transfer to Golgi apparatus through the endoplasmic reticulum (ER). Cleavage by KEX2 generates 16 peptides YAIG-I to YAIG-XVI. To process the precursor peptide further, at least two peptidases are necessary to cleave the N-terminal and C-terminal sides of the Tyr-Ala-Ile-Gly core peptide which serves as backbone for the synthesis of ustiloxin B, through cyclization and modification of the tyrosine with a non-protein coding amino acid, norvaline. One of the two peptidases must be the serine peptidase ustP; and the other pepdidase is probably ustH. Macrocyclization of the core peptide derived from ustA requires the tyrosinase ustQ, as well as the homologous oxidases ustYa and ustYb, and leads to the production of the first cyclization product N-desmethylustiloxin F. For the formation of N-desmethylustiloxin F, three oxidation steps are required, hydroxylation at the benzylic position, hydroxylation at either the aromatic ring of Tyr or beta-position of Ile, and oxidative cyclization. UstQ may catalyze the oxidation of a phenol moiety, whereas the ustYa and ustYb are most likely responsible for the remaining two-step oxidations. N-desmethylustiloxin F is then methylated by ustM to yield ustiloxin F which in turn substrate of the cytochrome P450 monooxygenase ustC which catalyzes the formation of S-deoxyustiloxin H. The flavoprotein monooxygenases ustF1 and ustF2 then participate in the modification of the side chain of S-deoxyustiloxin H, leading to the synthesis of an oxime intermediate, via ustiloxin H. Finally, carboxylative dehydration performed by the cysteine desulfurase-like protein ustD yields ustiloxin B. The protein is Oxidase ustYa of Aspergillus flavus (strain ATCC 200026 / FGSC A1120 / IAM 13836 / NRRL 3357 / JCM 12722 / SRRC 167).